Reading from the N-terminus, the 360-residue chain is Protein pelota homolog (360 aa).

It belongs to the eukaryotic release factor 1 family. Pelota subfamily. Monomer. Requires a divalent metal cation as cofactor.

It is found in the cytoplasm. Functionally, may function in recognizing stalled ribosomes, interact with stem-loop structures in stalled mRNA molecules, and effect endonucleolytic cleavage of the mRNA. May play a role in the release non-functional ribosomes and degradation of damaged mRNAs. Has endoribonuclease activity. The protein is Protein pelota homolog of Hyperthermus butylicus (strain DSM 5456 / JCM 9403 / PLM1-5).